A 117-amino-acid chain; its full sequence is Protein TCL1B2 (117 aa).

Belongs to the TCL1 family.

This is Protein TCL1B2 (Tcl1b2) from Mus musculus (Mouse).